We begin with the raw amino-acid sequence, 144 residues long: Large ribosomal subunit protein uL13 (144 aa).

Belongs to the universal ribosomal protein uL13 family. As to quaternary structure, part of the 50S ribosomal subunit.

In terms of biological role, this protein is one of the early assembly proteins of the 50S ribosomal subunit, although it is not seen to bind rRNA by itself. It is important during the early stages of 50S assembly. The chain is Large ribosomal subunit protein uL13 from Natronomonas pharaonis (strain ATCC 35678 / DSM 2160 / CIP 103997 / JCM 8858 / NBRC 14720 / NCIMB 2260 / Gabara) (Halobacterium pharaonis).